Consider the following 122-residue polypeptide: Large ribosomal subunit protein uL14 (122 aa).

The protein belongs to the universal ribosomal protein uL14 family. In terms of assembly, part of the 50S ribosomal subunit. Forms a cluster with proteins L3 and L19. In the 70S ribosome, L14 and L19 interact and together make contacts with the 16S rRNA in bridges B5 and B8.

Binds to 23S rRNA. Forms part of two intersubunit bridges in the 70S ribosome. This chain is Large ribosomal subunit protein uL14, found in Heliobacterium modesticaldum (strain ATCC 51547 / Ice1).